The sequence spans 377 residues: UPF0754 membrane protein lmo2224 (377 aa).

Transmembrane regions (helical) follow at residues 1 to 21 and 357 to 377; these read MSVLFTILLMAVIGGFIGAMT and YLGGILGGFIGIIQGILAMWI.

It belongs to the UPF0754 family.

The protein localises to the cell membrane. The sequence is that of UPF0754 membrane protein lmo2224 from Listeria monocytogenes serovar 1/2a (strain ATCC BAA-679 / EGD-e).